The sequence spans 280 residues: Dual adapter for phosphotyrosine and 3-phosphotyrosine and 3-phosphoinositide (280 aa).

A disordered region spans residues 1-20 (MGRAELLEGKMSTQDPSDLW). In terms of domain architecture, SH2 spans 35–129 (WYHGNLTRHA…GTLMVLKHPY (95 aa)). Residue Tyr139 is modified to Phosphotyrosine. A Phosphoserine modification is found at Ser141. Positions 164 to 259 (LGTKEGYLTK…WIKILRWKLS (96 aa)) constitute a PH domain.

Interacts with PtdIns(3,4,5)P3 and PLCG2. In vitro, interacts with PtdIns(3,4)P2. Phosphorylated on tyrosine residues. In terms of tissue distribution, highly expressed in placenta and lung, followed by brain, heart, kidney, liver, pancreas and skeletal muscle. Expressed by B-lymphocytes, but not T-lymphocytes or nonhematopoietic cells.

It localises to the cytoplasm. The protein resides in the membrane. Its function is as follows. May act as a B-cell-associated adapter that regulates B-cell antigen receptor (BCR)-signaling downstream of PI3K. This chain is Dual adapter for phosphotyrosine and 3-phosphotyrosine and 3-phosphoinositide (DAPP1), found in Homo sapiens (Human).